Consider the following 620-residue polypeptide: MRDIVFVSPQLYLSSQEGWKSDSAKSGFIPILKNDLQRFQDSLKHIVDARNSLSETLLNSNDDGSIHNSDQNTGLNKDKEASIADNNSANKCATSSSRYQELKQFLPISLDQQIHTVSLQGVSSSFSRGQIESLLDHCLNLALTETQSNSALKVEAWSSFSSFLDTQDIFIRFSKVDEDEAFVNTLNYCKALFAFIRKLHEDFKIELHLDLNTKEYVEDRTGTIPSVKPEKASEFYSVFKNIEDQTDERNSKKEQLDDSSTQYKVDTNTLSDLPSDALDQLCKDIIEFRTKVVSIEKEKKMKSTYEESRRQRHQMQKVFDQIRKNHSGAKGSANTEEEDTNMEDEDEEDDTEDDLALEKRKEERDLEESNRRYEDMLHQLHSNTEPKIKSIRADIMSAENYEEHLEKNRSLYLKELLHLANDVHYDHHRSFKEQEERRDEEDRAKNGNAKELAPIQLSDGKAISAGKAAAITLPEGTVKSENYNADKNVSESSEHVKIKFDFKKAIDHSVESSSEDEGYRESELPPTKPSERSAAEDRLPFTADELNIRLTNLKESRYVDELVREFLGVYEDELVEYILENIRVNQSKQALLNELRETFDEDGETIADRLWSRKEFRLGT.

Over residues 59–75 (NSNDDGSIHNSDQNTGL) the composition is skewed to polar residues. Disordered regions lie at residues 59-82 (NSNDDGSIHNSDQNTGLNKDKEAS), 246-270 (TDERNSKKEQLDDSSTQYKVDTNTL), 323-373 (RKNH…NRRY), 428-452 (HRSFKEQEERRDEEDRAKNGNAKEL), and 509-537 (SVESSSEDEGYRESELPPTKPSERSAAED). Residues 246–256 (TDERNSKKEQL) show a composition bias toward basic and acidic residues. The span at 258–270 (DSSTQYKVDTNTL) shows a compositional bias: polar residues. The stretch at 296 to 385 (EKEKKMKSTY…MLHQLHSNTE (90 aa)) forms a coiled coil. Over residues 335 to 355 (TEEEDTNMEDEDEEDDTEDDL) the composition is skewed to acidic residues. Basic and acidic residues-rich tracts occupy residues 356–373 (ALEKRKEERDLEESNRRY) and 431–445 (FKEQEERRDEEDRAK). Residues serine 512 and serine 514 each carry the phosphoserine modification. Residues 517-537 (EGYRESELPPTKPSERSAAED) are compositionally biased toward basic and acidic residues.

This sequence belongs to the SNU71 family. As to quaternary structure, component of the 18S U1 snRNP particle, a subcomplex of the spliceosome.

The protein localises to the cytoplasm. The protein resides in the nucleus. Functionally, component of the U1 snRNP particle, which recognizes and binds the 5'-splice site of pre-mRNA. Together with other non-snRNP factors, U1 snRNP forms the spliceosomal commitment complex, that targets pre-mRNA to the splicing pathway. In Saccharomyces cerevisiae (strain ATCC 204508 / S288c) (Baker's yeast), this protein is U1 small nuclear ribonucleoprotein component SNU71 (SNU71).